Here is a 474-residue protein sequence, read N- to C-terminus: Poly(A) polymerase catalytic subunit (474 aa).

Catalysis depends on residues aspartate 193 and aspartate 195.

This sequence belongs to the poxviridae poly(A) polymerase catalytic subunit family. As to quaternary structure, heterodimer of a large (catalytic) subunit and a small (regulatory) subunit.

It carries out the reaction RNA(n) + ATP = RNA(n)-3'-adenine ribonucleotide + diphosphate. Its function is as follows. Polymerase that creates the 3'-poly(A) tail of mRNA's. This chain is Poly(A) polymerase catalytic subunit (PAPL), found in Bos taurus (Bovine).